Reading from the N-terminus, the 524-residue chain is Probable metalloreductase AIM14 (524 aa).

A run of 7 helical transmembrane segments spans residues 24–44 (VNIK…VLSI), 69–89 (SIPF…LSIF), 104–121 (RLGR…FISL), 143–163 (WISR…LYKW), 179–199 (FLGV…VNVM), 206–226 (LFYI…AFHA), and 230–250 (VPLL…QRFF). A Ferric oxidoreductase domain is found at 105 to 222 (LGRMAYCLVP…VTLWMFVVLI (118 aa)). An FAD-binding FR-type domain is found at 248–372 (RFFKSYYLHD…GGSGISFGLP (125 aa)).

It belongs to the ferric reductase (FRE) family. AIM14 subfamily.

It is found in the membrane. In terms of biological role, probable cell surface metalloreductase. May be involved in iron or copper homeostasis. The polypeptide is Probable metalloreductase AIM14 (AIM14) (Scheffersomyces stipitis (strain ATCC 58785 / CBS 6054 / NBRC 10063 / NRRL Y-11545) (Yeast)).